Reading from the N-terminus, the 483-residue chain is 1-aminocyclopropane-1-carboxylate synthase 2 (483 aa).

Position 275 is an N6-(pyridoxal phosphate)lysine (lysine 275).

It belongs to the class-I pyridoxal-phosphate-dependent aminotransferase family. The cofactor is pyridoxal 5'-phosphate.

The enzyme catalyses S-adenosyl-L-methionine = 1-aminocyclopropane-1-carboxylate + S-methyl-5'-thioadenosine + H(+). Its pathway is alkene biosynthesis; ethylene biosynthesis via S-adenosyl-L-methionine; ethylene from S-adenosyl-L-methionine: step 1/2. Its function is as follows. Catalyzes the formation of 1-aminocyclopropane-1-carboxylate, a direct precursor of ethylene in higher plants. Involved in defense response by producing ethylene after pathogen infection. Involved in several phosphate deficiency-induced adaptive responses, such as lateral root elongation. The polypeptide is 1-aminocyclopropane-1-carboxylate synthase 2 (Oryza sativa subsp. japonica (Rice)).